A 157-amino-acid chain; its full sequence is Transcription inhibitor protein Gfh1 (157 aa).

A coiled-coil region spans residues 1–74 (MAREVKLTKA…LEDVLSRAVI (74 aa)).

Belongs to the GreA/GreB family. As to quaternary structure, interacts with RNAP.

Functionally, inhibits all catalytic activities of RNA polymerase (RNAP) by partially occluding its substrate-binding site and preventing NTP binding. This Thermus aquaticus protein is Transcription inhibitor protein Gfh1 (gfh1).